Consider the following 233-residue polypeptide: Ribonuclease 3 (233 aa).

The RNase III domain maps to 8–135 (AQRFLEDKQL…VIGAIYLDQG (128 aa)). Glu48 is a binding site for Mg(2+). Asp52 is a catalytic residue. Positions 121 and 124 each coordinate Mg(2+). Residue Glu124 is part of the active site. The 70-residue stretch at 161-230 (DYKSKLQELV…AQKVLQDNLV (70 aa)) folds into the DRBM domain.

This sequence belongs to the ribonuclease III family. In terms of assembly, homodimer. It depends on Mg(2+) as a cofactor.

Its subcellular location is the cytoplasm. It carries out the reaction Endonucleolytic cleavage to 5'-phosphomonoester.. Digests double-stranded RNA. Involved in the processing of primary rRNA transcript to yield the immediate precursors to the large and small rRNAs (23S and 16S). Processes some mRNAs, and tRNAs when they are encoded in the rRNA operon. Processes pre-crRNA and tracrRNA of type II CRISPR loci if present in the organism. The protein is Ribonuclease 3 of Syntrophomonas wolfei subsp. wolfei (strain DSM 2245B / Goettingen).